We begin with the raw amino-acid sequence, 310 residues long: Phosphoribosylaminoimidazole-succinocarboxamide synthase (310 aa).

This sequence belongs to the SAICAR synthetase family.

It catalyses the reaction 5-amino-1-(5-phospho-D-ribosyl)imidazole-4-carboxylate + L-aspartate + ATP = (2S)-2-[5-amino-1-(5-phospho-beta-D-ribosyl)imidazole-4-carboxamido]succinate + ADP + phosphate + 2 H(+). It participates in purine metabolism; IMP biosynthesis via de novo pathway; 5-amino-1-(5-phospho-D-ribosyl)imidazole-4-carboxamide from 5-amino-1-(5-phospho-D-ribosyl)imidazole-4-carboxylate: step 1/2. The polypeptide is Phosphoribosylaminoimidazole-succinocarboxamide synthase (Dechloromonas aromatica (strain RCB)).